A 415-amino-acid polypeptide reads, in one-letter code: Peptide chain release factor subunit 1 (415 aa).

The protein belongs to the eukaryotic release factor 1 family. In terms of assembly, heterodimer of two subunits, one of which binds GTP.

Its subcellular location is the cytoplasm. Functionally, directs the termination of nascent peptide synthesis (translation) in response to the termination codons UAA, UAG and UGA. The polypeptide is Peptide chain release factor subunit 1 (Thermococcus sibiricus (strain DSM 12597 / MM 739)).